Here is a 468-residue protein sequence, read N- to C-terminus: Two-component response regulator-like APRR9 (468 aa).

Residues Arg-38–Trp-156 form the Response regulatory domain. 2 stretches are compositionally biased toward polar residues: residues His-168–His-177 and Asp-194–Asn-203. Disordered regions lie at residues His-168–Asn-203, Val-302–Gln-416, and Arg-442–Ser-468. The span at Thr-315–Thr-327 shows a compositional bias: basic and acidic residues. Over residues Ser-328–Asp-364 the composition is skewed to polar residues. 2 stretches are compositionally biased toward basic and acidic residues: residues Ser-371 to Glu-382 and Glu-400 to Lys-409. The CCT domain maps to Arg-417–Thr-459. Residues Arg-458–Ser-468 show a composition bias toward polar residues.

It belongs to the ARR-like family. Phosphorylated. Phosphorylation varies throughout the diurnal cycle.

The protein resides in the nucleus. Transcriptional repressor of CCA1 and LHY, and positive regulator of LWD1 and LWD2 expression. Controls photoperiodic flowering response and temperature compensation. Involved in the positive and negative feedback loops of the circadian clock. Expression of several members of the ARR-like family is controlled by circadian rhythm. Regulated at the transcriptional level by a corepressor complex consisting of ELF4, ELF3, and LUX. APRR9, APRR7, and APRR5 coordinately act on the upstream region of the target genes to repress their expression from noon until midnight. The particular coordinated sequential expression of APRR9, APRR7, APRR5, APRR3 and APPR1 result to circadian waves that may be at the basis of the endogenous circadian clock. The chain is Two-component response regulator-like APRR9 (APRR9) from Arabidopsis thaliana (Mouse-ear cress).